The following is a 349-amino-acid chain: 3'-5' exoribonuclease 1 (349 aa).

2 stretches are compositionally biased toward basic and acidic residues: residues 1 to 10 and 22 to 35; these read MEDPQSKEPA and PRPEGGEEPPRPSP. A disordered region spans residues 1 to 48; sequence MEDPQSKEPAGEAVALALLESPRPEGGEEPPRPSPEETQQCKFDGQET. Residues Ser-59 and Ser-62 each carry the phosphoserine modification. Residues 76 to 110 form the SAP domain; that stretch reads INRMSKEELRAKLSEFKLETRGVKDVLKKRLKNYY. The 177-residue stretch at 130–306 folds into the Exonuclease domain; it reads ICIIDFEATC…DDSKNIARIA (177 aa). Residues Asp-134 and Glu-136 each contribute to the Mg(2+) site. The active-site Proton acceptor is Glu-136. 2 residues coordinate AMP: Glu-136 and Ala-137. Asp-234 is a binding site for Mg(2+). His-293 acts as the Proton acceptor in catalysis. His-293 contacts AMP. Residue Asp-298 coordinates Mg(2+).

In terms of assembly, identified in a histone pre-mRNA complex, at least composed of ERI1, LSM11, SLBP, SNRPB, SYNCRIP and YBX1. Interacts in a cooperative manner with SLBP to the mature 3'-end of histone mRNAs. Binds to 40S and 60S ribosomal subunits and to 80S assembled ribosomes. Found in a ternary complex with SLBP and the stem-loop structure of the 3'-end of histone mRNAs. Mg(2+) is required as a cofactor.

The protein localises to the cytoplasm. Its subcellular location is the nucleus. It localises to the nucleolus. The catalysed reaction is Exonucleolytic cleavage in the 3'- to 5'-direction to yield nucleoside 5'-phosphates.. With respect to regulation, although it can bind simultaneously with SLBP to the 3'-end of histone mRNA, the presence of SLBP prevents the exonuclease activity. RNA exonuclease that binds to the 3'-end of histone mRNAs and degrades them, suggesting that it plays an essential role in histone mRNA decay after replication. A 2' and 3'-hydroxyl groups at the last nucleotide of the histone 3'-end is required for efficient 3'-end histone mRNA exonuclease activity and degradation of RNA substrates. Also able to degrade the 3'-overhangs of short interfering RNAs (siRNAs) in vitro, suggesting a possible role as regulator of RNA interference (RNAi). Required for binding the 5'-ACCCA-3' sequence present in stem-loop structure. Able to bind other mRNAs. Required for 5.8S rRNA 3'-end processing. Also binds to 5.8s ribosomal RNA. Binds with high affinity to the stem-loop structure of replication-dependent histone pre-mRNAs. In vitro, does not have sequence specificity. In vitro, has weak DNA exonuclease activity. In vitro, shows biphasic kinetics such that there is rapid hydrolysis of the last three unpaired RNA nucleotides in the 39 flanking sequence followed by a much slower cleavage through the stem that occurs over a longer incubation period in the order of hours. ERI1-mediated RNA metabolism plays a key role in chondrogenesis. This Homo sapiens (Human) protein is 3'-5' exoribonuclease 1.